Consider the following 431-residue polypeptide: Gamma-glutamyl phosphate reductase (431 aa).

Belongs to the gamma-glutamyl phosphate reductase family.

It localises to the cytoplasm. The catalysed reaction is L-glutamate 5-semialdehyde + phosphate + NADP(+) = L-glutamyl 5-phosphate + NADPH + H(+). It participates in amino-acid biosynthesis; L-proline biosynthesis; L-glutamate 5-semialdehyde from L-glutamate: step 2/2. Functionally, catalyzes the NADPH-dependent reduction of L-glutamate 5-phosphate into L-glutamate 5-semialdehyde and phosphate. The product spontaneously undergoes cyclization to form 1-pyrroline-5-carboxylate. This Acaryochloris marina (strain MBIC 11017) protein is Gamma-glutamyl phosphate reductase.